The primary structure comprises 85 residues: Large ribosomal subunit protein bL27 (85 aa).

The tract at residues 1–22 (MAHKKAGGSTRNGRDSEAKRMG) is disordered.

Belongs to the bacterial ribosomal protein bL27 family.

The protein is Large ribosomal subunit protein bL27 of Escherichia coli O6:K15:H31 (strain 536 / UPEC).